The following is a 452-amino-acid chain: Gamma conglutin 1 (452 aa).

Residues 1-33 (MAKNMAPILHILVISLSYSFLFVTSSSQNSQSL) form the signal peptide. One can recognise a Peptidase A1 domain in the interval 61 to 432 (HWGNILKRTP…DLARSRVGFN (372 aa)). Intrachain disulfides connect cysteine 89–cysteine 179, cysteine 103–cysteine 116, cysteine 108–cysteine 134, cysteine 119–cysteine 129, and cysteine 353–cysteine 394. Asparagine 131 carries an N-linked (GlcNAc...) asparagine glycan.

Belongs to the peptidase A1 family. Two-subunit monomeric unit made of alpha and beta subunits coupled by disulfide bonds (at pH 4.5 and under non-reducing conditions). Monomeric alpha and beta subunits in reducing conditions. Can also form oligomers including dimer, tetramer and cyclic hexamer (trimer of dimers) (at pH &gt; 5.5). Component of globulins complexes which accumulate in seeds. Interacts with flavonoids (e.g. apigenin glucosides) present in globulins complexes. Post-translationally, glycosylated on alpha chain at Asn-131; identified N-glycans bound are Man(2)(Xyl)(Fuc)GlcNAc(2), Man(3)(Xyl)(Fuc)GlcNAc(2), GlcNAcMan(3)(Xyl)(Fuc)GlcNAc(2) and GlcNAc(2)Man(3)(Xyl)(Fuc)GlcNAc(2). In terms of tissue distribution, expressed in developing seeds and in the young roots and cotyledons of germinating seeds and young seedlings.

The protein localises to the secreted. Its subcellular location is the extracellular space. Its function is as follows. Sulfur-rich seed storage protein that remains undegraded at germination. The uncleaved form exhibits some inhibitory activity against GH11 xylanase from T.longibrachiatum, more at pH 7 than at pH 5.3, but not against GH12 xyloglucan-specific endoglucanase (XEG) from A.aculeatus. Binds to model phospholipid membranes containing dimyristoyl phosphatidylglycerol (DMPG), dioleoyl phosphatidic acid (DOPA) or mixture of dimyristoyl phosphatidylcholine and dimyristoyl phosphatidylglycerol (DMPC:DMPG), or mixture of dioleoyl phosphatidic acid and dioleoyl phosphatidylcholine (DOPC:DOPA). In Lupinus albus (White lupine), this protein is Gamma conglutin 1.